We begin with the raw amino-acid sequence, 159 residues long: MHISIVAVGKLKEKYLIAGINEYTKRLSAYAKIDIIEVADEKTPERASELEEEQIKEREGGRLLAKIPHDAHVIALAIEGKMQSSEQFAARLDELATYGKSKVVFVIGGSLGLSKQVMARADETLSFSKMTFPHQLMRLILLEQIYRAFRINRGEPYHK.

S-adenosyl-L-methionine contacts are provided by residues L76, G108, and 127-132 (FSKMTF).

It belongs to the RNA methyltransferase RlmH family. As to quaternary structure, homodimer.

The protein localises to the cytoplasm. It carries out the reaction pseudouridine(1915) in 23S rRNA + S-adenosyl-L-methionine = N(3)-methylpseudouridine(1915) in 23S rRNA + S-adenosyl-L-homocysteine + H(+). Its function is as follows. Specifically methylates the pseudouridine at position 1915 (m3Psi1915) in 23S rRNA. This is Ribosomal RNA large subunit methyltransferase H from Geobacillus kaustophilus (strain HTA426).